Consider the following 78-residue polypeptide: Translational regulator CsrA (78 aa).

It belongs to the CsrA/RsmA family. Homodimer; the beta-strands of each monomer intercalate to form a hydrophobic core, while the alpha-helices form wings that extend away from the core.

The protein resides in the cytoplasm. In terms of biological role, a translational regulator that binds mRNA to regulate translation initiation and/or mRNA stability. Usually binds in the 5'-UTR at or near the Shine-Dalgarno sequence preventing ribosome-binding, thus repressing translation. Its main target seems to be the major flagellin gene, while its function is anatagonized by FliW. The polypeptide is Translational regulator CsrA (Nitratidesulfovibrio vulgaris (strain ATCC 29579 / DSM 644 / CCUG 34227 / NCIMB 8303 / VKM B-1760 / Hildenborough) (Desulfovibrio vulgaris)).